We begin with the raw amino-acid sequence, 33 residues long: Suppressor protein HFN40 (33 aa).

Suppresses expansion of husk leaf blades. This is Suppressor protein HFN40 from Zea mays (Maize).